The primary structure comprises 63 residues: Adipokinetic prohormone type 1 (63 aa).

An N-terminal signal peptide occupies residues 1–22 (MVQRCALVVLLVVAVAAALCSA). Gln-23 carries the pyrrolidone carboxylic acid modification. Residue Thr-32 is modified to Threonine amide.

It belongs to the AKH/HRTH/RPCH family.

It is found in the secreted. In terms of biological role, this hormone, released from cells in the corpora cardiaca, causes release of diglycerides from the fat body and stimulation of muscles to use these diglycerides as an energy source during energy-demanding processes. In Locusta migratoria (Migratory locust), this protein is Adipokinetic prohormone type 1.